We begin with the raw amino-acid sequence, 1403 residues long: Mannuronan C5-epimerase AlgE1 (1403 aa).

7 PbH1 repeats span residues Asp-133–Glu-155, Thr-157–Tyr-179, Gln-180–Thr-202, Thr-204–Arg-226, Ala-257–Gly-279, Ala-280–Val-302, and Thr-320–Gly-359. Disordered stretches follow at residues Ser-372–Leu-395 and Ala-408–Arg-428. Hemolysin-type calcium-binding repeat units lie at residues Gly-388–Thr-403, Gly-406–Leu-422, Gly-424–Phe-440, Gly-557–Leu-573, Val-574–Phe-591, Glu-697–Glu-712, Gly-716–Leu-732, and Gly-734–Phe-750. PbH1 repeat units follow at residues Asp-977 to Glu-999, Thr-1001 to Tyr-1023, Leu-1024 to Thr-1046, Thr-1048 to Arg-1070, Thr-1101 to Gly-1123, Thr-1124 to Val-1146, Thr-1163 to Glu-1185, and Ser-1190 to Gly-1212. Hemolysin-type calcium-binding repeat units follow at residues Gly-1227 to Leu-1243, Tyr-1244 to Leu-1261, and Gly-1263 to Phe-1279.

The protein belongs to the D-mannuronate C5-epimerase family. Requires Ca(2+) as cofactor.

The protein resides in the secreted. It catalyses the reaction [(1-&gt;4)-beta-D-mannuronosyl](n) = [alginate](n). The protein operates within glycan biosynthesis; alginate biosynthesis. Its activity is regulated as follows. Inhibited by zinc. Functionally, converts beta-D-mannuronic acid (M) to alpha-L-guluronic acid (G), producing a polymer with gel-forming capacity, required for the formation of the cyst coat. This chain is Mannuronan C5-epimerase AlgE1, found in Azotobacter vinelandii.